Consider the following 57-residue polypeptide: Metallothionein-2 (57 aa).

The beta stretch occupies residues 1 to 28; sequence PDPCCNDKCDCKEGECKTGCKCTSCRCP. 18 residues coordinate a divalent metal cation: Cys-4, Cys-5, Cys-9, Cys-11, Cys-16, Cys-20, Cys-22, Cys-25, Cys-27, Cys-30, Cys-33, Cys-37, Cys-39, Cys-45, Cys-49, Cys-53, Cys-55, and Cys-56. The alpha stretch occupies residues 29-57; sequence PCEQCSSGCKCANKEDCRKTCSKPCSCCP.

The protein belongs to the metallothionein superfamily. Type 3 family.

Its function is as follows. Metallothioneins have a high content of cysteine residues that bind various heavy metals. Class I MTS in marine crustacea are involved in the sequestration of elevated levels of heavy-metal ions. The polypeptide is Metallothionein-2 (Scylla serrata (Mud crab)).